A 144-amino-acid chain; its full sequence is Ribosomal RNA large subunit methyltransferase H (144 aa).

S-adenosyl-L-methionine is bound by residues Leu-63, Gly-92, and 111–116; that span reads LSPMTF.

This sequence belongs to the RNA methyltransferase RlmH family. Homodimer.

Its subcellular location is the cytoplasm. The catalysed reaction is pseudouridine(1915) in 23S rRNA + S-adenosyl-L-methionine = N(3)-methylpseudouridine(1915) in 23S rRNA + S-adenosyl-L-homocysteine + H(+). Its function is as follows. Specifically methylates the pseudouridine at position 1915 (m3Psi1915) in 23S rRNA. This Synechococcus sp. (strain CC9605) protein is Ribosomal RNA large subunit methyltransferase H.